The following is a 159-amino-acid chain: Ribosomal RNA large subunit methyltransferase H (159 aa).

Residues Leu76, Gly107, and Leu126–Met131 contribute to the S-adenosyl-L-methionine site.

The protein belongs to the RNA methyltransferase RlmH family. As to quaternary structure, homodimer.

The protein resides in the cytoplasm. The catalysed reaction is pseudouridine(1915) in 23S rRNA + S-adenosyl-L-methionine = N(3)-methylpseudouridine(1915) in 23S rRNA + S-adenosyl-L-homocysteine + H(+). In terms of biological role, specifically methylates the pseudouridine at position 1915 (m3Psi1915) in 23S rRNA. In Acinetobacter baylyi (strain ATCC 33305 / BD413 / ADP1), this protein is Ribosomal RNA large subunit methyltransferase H.